The sequence spans 343 residues: 4-hydroxy-2-oxovalerate aldolase (343 aa).

Residues 4-254 (PRLTDTTLRD…NPGLDVFGLM (251 aa)) enclose the Pyruvate carboxyltransferase domain. Residue 12 to 13 (RD) coordinates substrate. D13 is a binding site for Mn(2+). H16 acts as the Proton acceptor in catalysis. S166 and H193 together coordinate substrate. Mn(2+)-binding residues include H193 and H195. A substrate-binding site is contributed by Y284.

This sequence belongs to the 4-hydroxy-2-oxovalerate aldolase family.

The catalysed reaction is (S)-4-hydroxy-2-oxopentanoate = acetaldehyde + pyruvate. The polypeptide is 4-hydroxy-2-oxovalerate aldolase (Chloroflexus aggregans (strain MD-66 / DSM 9485)).